Reading from the N-terminus, the 91-residue chain is MGSKQSAPPKPLQLPQPRVSLLREAKPSLYGRYNCKCCWFQDKNLVECSDHYLCLKCISSMLKRGKNCEICGKAIPTYIEVGITPTAPQLN.

The N-myristoyl glycine; by host moiety is linked to residue Gly2. The RING-type; atypical zinc finger occupies 35-71 (CKCCWFQDKNLVECSDHYLCLKCISSMLKRGKNCEIC). A PTAP/PSAP motif motif is present at residues 85 to 88 (PTAP).

This sequence belongs to the arenaviridae Z protein family. In terms of assembly, interacts with protein NP; this interaction probably directs the encapsidated genome to budding sites. Interacts (via RING domain) with polymerase L; this interaction inhibits viral transcription and replication, Z partially blocks the product exit tunnel for the releasing nascent RNA product. Interacts with the glycoprotein complex; this interaction plays a role in virion budding. Interacts with host eIF4E; this interaction results in eIF4E reduced affinity for its substrate, the 5'-m7 G cap structure. Interacts (via late-budding domain) with host TSG101; this interaction is essential for budding and release of viral particles. Interacts with host RPLP0; this interaction may serve to load ribosome-like particles inside the virion. Interacts with host PML; this interaction induces PML bodies redistribution in the cytoplasm upon viral infection. In terms of processing, myristoylation is required for the role of RING finger protein Z in assembly and budding.

It localises to the virion. The protein resides in the host cytoplasm. It is found in the host perinuclear region. The protein localises to the host cell membrane. In terms of biological role, plays a crucial role in virion assembly and budding. Expressed late in the virus life cycle, it acts as an inhibitor of viral transcription and RNA synthesis by interacting with the viral polymerase L. Presumably recruits the NP encapsidated genome to cellular membranes at budding sites via direct interaction with NP. Plays critical roles in the final steps of viral release by interacting with host TSG101, a member of the vacuolar protein-sorting pathway and using other cellular host proteins involved in vesicle formation pathway. The budding of the virus progeny occurs after association of protein Z with the viral glycoprotein complex SSP-GP1-GP2 at the cell periphery, step that requires myristoylation of protein Z. Also selectively represses protein production by associating with host eIF4E. In cell-based minigenome assay, has an inhibitory effect on the ribonucleoprotein machinery (vRNP), which is responsible for the replication and transcription of the viral genome. The sequence is that of RING finger protein Z from Latino mammarenavirus (isolate Rat/Bolivia/MARU 1924/1965) (LATV).